The chain runs to 714 residues: Polyribonucleotide nucleotidyltransferase (714 aa).

Asp493 and Asp499 together coordinate Mg(2+). In terms of domain architecture, KH spans 559–618 (PRIETTKIPADRIGELIGPGGKNIKAIQAESGADINIEEDGTVHIYAAKQEGLDRALELV). The region spanning 628-696 (GELYTGKIVS…DKGRVKMSIR (69 aa)) is the S1 motif domain.

The protein belongs to the polyribonucleotide nucleotidyltransferase family. Mg(2+) serves as cofactor.

It localises to the cytoplasm. It catalyses the reaction RNA(n+1) + phosphate = RNA(n) + a ribonucleoside 5'-diphosphate. Functionally, involved in mRNA degradation. Catalyzes the phosphorolysis of single-stranded polyribonucleotides processively in the 3'- to 5'-direction. This chain is Polyribonucleotide nucleotidyltransferase, found in Akkermansia muciniphila (strain ATCC BAA-835 / DSM 22959 / JCM 33894 / BCRC 81048 / CCUG 64013 / CIP 107961 / Muc).